The sequence spans 365 residues: UDP-N-acetylglucosamine--N-acetylmuramyl-(pentapeptide) pyrophosphoryl-undecaprenol N-acetylglucosamine transferase (365 aa).

Residues 10-12 (TGG), N128, R170, S199, I250, and Q295 each bind UDP-N-acetyl-alpha-D-glucosamine.

The protein belongs to the glycosyltransferase 28 family. MurG subfamily.

The protein localises to the cell inner membrane. The enzyme catalyses di-trans,octa-cis-undecaprenyl diphospho-N-acetyl-alpha-D-muramoyl-L-alanyl-D-glutamyl-meso-2,6-diaminopimeloyl-D-alanyl-D-alanine + UDP-N-acetyl-alpha-D-glucosamine = di-trans,octa-cis-undecaprenyl diphospho-[N-acetyl-alpha-D-glucosaminyl-(1-&gt;4)]-N-acetyl-alpha-D-muramoyl-L-alanyl-D-glutamyl-meso-2,6-diaminopimeloyl-D-alanyl-D-alanine + UDP + H(+). The protein operates within cell wall biogenesis; peptidoglycan biosynthesis. Cell wall formation. Catalyzes the transfer of a GlcNAc subunit on undecaprenyl-pyrophosphoryl-MurNAc-pentapeptide (lipid intermediate I) to form undecaprenyl-pyrophosphoryl-MurNAc-(pentapeptide)GlcNAc (lipid intermediate II). In Prosthecochloris aestuarii (strain DSM 271 / SK 413), this protein is UDP-N-acetylglucosamine--N-acetylmuramyl-(pentapeptide) pyrophosphoryl-undecaprenol N-acetylglucosamine transferase.